The chain runs to 122 residues: Large ribosomal subunit protein bL19 (122 aa).

It belongs to the bacterial ribosomal protein bL19 family.

Its function is as follows. This protein is located at the 30S-50S ribosomal subunit interface and may play a role in the structure and function of the aminoacyl-tRNA binding site. In Mycoplasmoides gallisepticum (strain R(low / passage 15 / clone 2)) (Mycoplasma gallisepticum), this protein is Large ribosomal subunit protein bL19.